A 92-amino-acid chain; its full sequence is MARVTVEDAVEQIGNRFDMILVAARRARQIAVQGKDPMVEEMNDKPTVIALREIELGLVNAHTLDADERQSVREREAAEIAAVAAIAEGRSL.

Belongs to the RNA polymerase subunit omega family. In terms of assembly, the RNAP catalytic core consists of 2 alpha, 1 beta, 1 beta' and 1 omega subunit. When a sigma factor is associated with the core the holoenzyme is formed, which can initiate transcription.

It carries out the reaction RNA(n) + a ribonucleoside 5'-triphosphate = RNA(n+1) + diphosphate. Functionally, promotes RNA polymerase assembly. Latches the N- and C-terminal regions of the beta' subunit thereby facilitating its interaction with the beta and alpha subunits. The polypeptide is DNA-directed RNA polymerase subunit omega (Shewanella sp. (strain ANA-3)).